A 126-amino-acid polypeptide reads, in one-letter code: uncharacterized protein (126 aa).

The N-terminal stretch at 1–27 is a signal peptide; the sequence is MKNLFIFLSLMMMFVLTACGGSKYDDA. Residues 93–126 form a disordered region; the sequence is MTDMPGNGENDRLGLSKKTPDYEEVKGEETELEE. Residues 101-126 show a composition bias toward basic and acidic residues; sequence ENDRLGLSKKTPDYEEVKGEETELEE.

This is an uncharacterized protein from Bacillus subtilis (strain 168).